We begin with the raw amino-acid sequence, 155 residues long: Molybdopterin synthase catalytic subunit (155 aa).

Substrate is bound by residues 109 to 110 (HR), Lys-125, and 132 to 134 (KKE).

The protein belongs to the MoaE family. MOCS2B subfamily. Heterotetramer; composed of 2 small (MOCS2A) and 2 large (MOCS2B) subunits.

It localises to the cytoplasm. The protein resides in the cytosol. The enzyme catalyses 2 [molybdopterin-synthase sulfur-carrier protein]-C-terminal-Gly-aminoethanethioate + cyclic pyranopterin phosphate + H2O = molybdopterin + 2 [molybdopterin-synthase sulfur-carrier protein]-C-terminal Gly-Gly + 2 H(+). It participates in cofactor biosynthesis; molybdopterin biosynthesis. Functionally, catalytic subunit of the molybdopterin synthase complex, a complex that catalyzes the conversion of precursor Z into molybdopterin. Acts by mediating the incorporation of 2 sulfur atoms from thiocarboxylated MOCS2A into precursor Z to generate a dithiolene group. The protein is Molybdopterin synthase catalytic subunit of Taeniopygia guttata (Zebra finch).